The primary structure comprises 86 residues: Sec-independent protein translocase protein TatA (86 aa).

Residues 3-23 (IFGVGLPEVTVILILALLIFG) form a helical membrane-spanning segment. Residues 56-86 (MNEEDESPKSIESNQTNEINQEKIDSENSKK) form a disordered region. Over residues 65-74 (SIESNQTNEI) the composition is skewed to polar residues. The span at 75 to 86 (NQEKIDSENSKK) shows a compositional bias: basic and acidic residues.

The protein belongs to the TatA/E family. As to quaternary structure, forms a complex with TatC.

The protein localises to the cell inner membrane. Functionally, part of the twin-arginine translocation (Tat) system that transports large folded proteins containing a characteristic twin-arginine motif in their signal peptide across membranes. TatA could form the protein-conducting channel of the Tat system. This is Sec-independent protein translocase protein TatA from Prochlorococcus marinus (strain MIT 9215).